Reading from the N-terminus, the 192-residue chain is Lipid A acyltransferase PagP (192 aa).

Positions 1-29 (MVVNVVIVAKKYFLFITLLIIQVSLPAHA) are cleaved as a signal peptide. Residues H64, D107, and S108 contribute to the active site.

The protein belongs to the lipid A palmitoyltransferase family. As to quaternary structure, homodimer.

It localises to the cell outer membrane. The catalysed reaction is a lipid A + a 1,2-diacyl-sn-glycero-3-phosphocholine = a hepta-acyl lipid A + a 2-acyl-sn-glycero-3-phosphocholine. It carries out the reaction a lipid IVA + a 1,2-diacyl-sn-glycero-3-phosphocholine = a lipid IVB + a 2-acyl-sn-glycero-3-phosphocholine. It catalyses the reaction a lipid IIA + a 1,2-diacyl-sn-glycero-3-phosphocholine = a lipid IIB + a 2-acyl-sn-glycero-3-phosphocholine. In terms of biological role, transfers a fatty acid residue from the sn-1 position of a phospholipid to the N-linked hydroxyfatty acid chain on the proximal unit of lipid A or its precursors. In Citrobacter rodentium (strain ICC168) (Citrobacter freundii biotype 4280), this protein is Lipid A acyltransferase PagP.